Here is a 179-residue protein sequence, read N- to C-terminus: MKKNLTNIYLIGLMGAGKTSVGSQLAKLTKRILYDSDKEIEKRTGADIAWIFEMEGEAGFRRREREMIEALCKLDNIILATGGGVVLDEKNRQQISETGVVIYLTASIDTQLKRIGQKGEMRRPLFIKNNSKEKLQQLNEIRKPLYQAMADLVYPTDDLNPRQLATQILVDIKQTYSDL.

15 to 20 (GAGKTS) serves as a coordination point for ATP. Threonine 19 serves as a coordination point for Mg(2+). Aspartate 37, arginine 61, and glycine 83 together coordinate substrate. Arginine 123 contacts ATP. Arginine 142 lines the substrate pocket.

The protein belongs to the shikimate kinase family. In terms of assembly, monomer. Mg(2+) serves as cofactor.

The protein localises to the cytoplasm. It carries out the reaction shikimate + ATP = 3-phosphoshikimate + ADP + H(+). Its pathway is metabolic intermediate biosynthesis; chorismate biosynthesis; chorismate from D-erythrose 4-phosphate and phosphoenolpyruvate: step 5/7. In terms of biological role, catalyzes the specific phosphorylation of the 3-hydroxyl group of shikimic acid using ATP as a cosubstrate. This is Shikimate kinase from Coxiella burnetii (strain CbuG_Q212) (Coxiella burnetii (strain Q212)).